The chain runs to 320 residues: Methyltransferase gedG (320 aa).

Positions 61 to 154 (DAGAGNGVYS…QLRPGGTFAC (94 aa)) are methyltransferase domain. The interval 231 to 252 (GLLPPERRGEVTEPDHEGPHDQ) is disordered. The segment covering 235–252 (PERRGEVTEPDHEGPHDQ) has biased composition (basic and acidic residues).

This sequence belongs to the methyltransferase superfamily.

The protein operates within secondary metabolite biosynthesis. Its function is as follows. Methyltransferase; part of the gene cluster that mediates the biosynthesis of geodin, an intermediate in the biosynthesis of other natural products. The pathway begins with the synthesis of atrochrysone thioester by the polyketide synthase (PKS) gedC. The atrochrysone carboxyl ACP thioesterase gedB then breaks the thioester bond and releases the atrochrysone carboxylic acid from gedC. The atrochrysone carboxylic acid is then converted to atrochrysone which is further transformed into emodinanthrone. The next step is performed by the emodinanthrone oxygenase gedH that catalyzes the oxidation of emodinanthrone to emodin. Emodin O-methyltransferase encoded probably by gedA then catalyzes methylation of the 8-hydroxy group of emodin to form questin. Ring cleavage of questin by questin oxidase gedK leads to desmethylsulochrin via several intermediates including questin epoxide. Another methylation step probably catalyzed by methyltransferase gedG leads to the formation of sulochrin which is further converted to dihydrogeodin by the sulochrin halogenase gedL. Finally, the dihydrogeodin oxidase gedJ catalyzes the stereospecific phenol oxidative coupling reaction converting dihydrogeodin to geodin. The chain is Methyltransferase gedG from Aspergillus terreus (strain NIH 2624 / FGSC A1156).